The chain runs to 307 residues: D-alanine--D-alanine ligase (307 aa).

Residues 104–301 (RTAFLAAGLP…FVSLCRWMVE (198 aa)) enclose the ATP-grasp domain. 130-183 (PLPRPFVIKPANEGSAVGVHILHEGDNRRTEIARSWSFGGQALVEEYIPGRELT) is an ATP binding site. Asp251, Glu268, and Asn270 together coordinate Mg(2+).

This sequence belongs to the D-alanine--D-alanine ligase family. Requires Mg(2+) as cofactor. Mn(2+) serves as cofactor.

It localises to the cytoplasm. The enzyme catalyses 2 D-alanine + ATP = D-alanyl-D-alanine + ADP + phosphate + H(+). The protein operates within cell wall biogenesis; peptidoglycan biosynthesis. Cell wall formation. The chain is D-alanine--D-alanine ligase from Granulibacter bethesdensis (strain ATCC BAA-1260 / CGDNIH1).